Consider the following 221-residue polypeptide: Octanoyltransferase (221 aa).

Residues Asp-31–Lys-213 form the BPL/LPL catalytic domain. Substrate-binding positions include Arg-70–His-77, Ser-142–Gly-144, and Gly-155–Ala-157. Catalysis depends on Cys-173, which acts as the Acyl-thioester intermediate.

Belongs to the LipB family.

It is found in the cytoplasm. It carries out the reaction octanoyl-[ACP] + L-lysyl-[protein] = N(6)-octanoyl-L-lysyl-[protein] + holo-[ACP] + H(+). It functions in the pathway protein modification; protein lipoylation via endogenous pathway; protein N(6)-(lipoyl)lysine from octanoyl-[acyl-carrier-protein]: step 1/2. Functionally, catalyzes the transfer of endogenously produced octanoic acid from octanoyl-acyl-carrier-protein onto the lipoyl domains of lipoate-dependent enzymes. Lipoyl-ACP can also act as a substrate although octanoyl-ACP is likely to be the physiological substrate. This is Octanoyltransferase from Mannheimia succiniciproducens (strain KCTC 0769BP / MBEL55E).